The primary structure comprises 364 residues: Flagellar P-ring protein (364 aa).

Positions 1–21 (MNVFKVFCLMVLLGWQLPAMA) are cleaved as a signal peptide.

Belongs to the FlgI family. In terms of assembly, the basal body constitutes a major portion of the flagellar organelle and consists of four rings (L,P,S, and M) mounted on a central rod.

Its subcellular location is the periplasm. The protein resides in the bacterial flagellum basal body. Functionally, assembles around the rod to form the L-ring and probably protects the motor/basal body from shearing forces during rotation. The sequence is that of Flagellar P-ring protein from Pseudoalteromonas translucida (strain TAC 125).